Here is a 736-residue protein sequence, read N- to C-terminus: Neprilysin-2 (736 aa).

Over 1-19 the chain is Cytoplasmic; sequence MRPDEEDGTTKSPGSRWTR. A helical; Signal-anchor for type II membrane protein transmembrane segment spans residues 20 to 40; the sequence is IWAIIALILLILFLLVLGAAI. At 41-736 the chain is on the extracellular side; it reads YFYINYKDSS…MNPREKCRVW (696 aa). The region spanning 52–736 is the Peptidase M13 domain; sequence VCLSPGCIKT…MNPREKCRVW (685 aa). 5 disulfide bridges follow: Cys-53/Cys-58, Cys-76/Cys-721, Cys-84/Cys-681, Cys-142/Cys-399, and Cys-608/Cys-733. Residues 103 to 123 adopt a coiled-coil conformation; the sequence is FENLGQDLEFALKELLDENDE. Residue His-571 participates in Zn(2+) binding. Residue Glu-572 is part of the active site. The Zn(2+) site is built by His-575 and Glu-633. Catalysis depends on Asp-637, which acts as the Proton donor.

Belongs to the peptidase M13 family. Zn(2+) is required as a cofactor. In terms of tissue distribution, expressed in muscle cells, GLR cells, SMB motor neurons and AIM interneurons.

The protein localises to the membrane. Its function is as follows. Required for olfactory plasticity, which is the change from positive chemotaxis to dispersal after prolonged exposure to an odorant. Thought to antagonise snet-1 by degrading excess snet-1 peptides and thus enabling olfactory plasticity. In Caenorhabditis elegans, this protein is Neprilysin-2.